The primary structure comprises 180 residues: MTQHHDTAEVSRVIATLTREVADFPEPGIQFKDLTPLLADARGLRVVTDALADIASGADLVAGLDARGFLLGAAVATRLGTGVLAVRKGGKLPPPVHGATYQLEYGTATLEIPAEGIDIAGRNVVIIDDVLATGGTLAAAARLLGDCGANVTGAGVVLELEALRGREAVAPLGVRSLHII.

Belongs to the purine/pyrimidine phosphoribosyltransferase family. As to quaternary structure, homodimer.

The protein resides in the cytoplasm. The enzyme catalyses AMP + diphosphate = 5-phospho-alpha-D-ribose 1-diphosphate + adenine. It participates in purine metabolism; AMP biosynthesis via salvage pathway; AMP from adenine: step 1/1. Catalyzes a salvage reaction resulting in the formation of AMP, that is energically less costly than de novo synthesis. The chain is Adenine phosphoribosyltransferase from Mycolicibacterium smegmatis (strain ATCC 700084 / mc(2)155) (Mycobacterium smegmatis).